Here is a 303-residue protein sequence, read N- to C-terminus: Peptidyl-prolyl isomerase CWC27 (303 aa).

Residues 7–153 enclose the PPIase cyclophilin-type domain; that stretch reads ASGKCVLYTT…AEVTIPYFDG (147 aa). 2 disordered regions span residues 155-195 and 208-274; these read SGQK…PPLD and ERLT…TDLA.

It belongs to the cyclophilin-type PPIase family. CWC27 subfamily. In terms of assembly, associated with the spliceosome.

It is found in the cytoplasm. Its subcellular location is the nucleus. It carries out the reaction [protein]-peptidylproline (omega=180) = [protein]-peptidylproline (omega=0). PPIases accelerate the folding of proteins. It catalyzes the cis-trans isomerization of proline imidic peptide bonds in oligopeptides. Involved in pre-mRNA splicing. This is Peptidyl-prolyl isomerase CWC27 (CWC27) from Eremothecium gossypii (strain ATCC 10895 / CBS 109.51 / FGSC 9923 / NRRL Y-1056) (Yeast).